Here is a 397-residue protein sequence, read N- to C-terminus: Enoyl-[acyl-carrier-protein] reductase [NADH] FabV (397 aa).

Residues 48–53 (GASTGY), 74–75 (FE), 111–112 (DA), and 139–140 (LA) each bind NAD(+). Residue Y225 participates in substrate binding. Residue Y235 is the Proton donor of the active site. Residues K244 and 273 to 275 (VVT) each bind NAD(+).

This sequence belongs to the TER reductase family. In terms of assembly, monomer.

It carries out the reaction a 2,3-saturated acyl-[ACP] + NAD(+) = a (2E)-enoyl-[ACP] + NADH + H(+). Its pathway is lipid metabolism; fatty acid biosynthesis. Its activity is regulated as follows. Resistant to triclosan. In terms of biological role, involved in the final reduction of the elongation cycle of fatty acid synthesis (FAS II). Catalyzes the NADH-dependent reduction of the carbon-carbon double bond in the enoyl moiety that is covalently linked to an acyl carrier protein (ACP). This Aeromonas salmonicida (strain A449) protein is Enoyl-[acyl-carrier-protein] reductase [NADH] FabV.